We begin with the raw amino-acid sequence, 263 residues long: uncharacterized protein (263 aa).

A signal peptide spans 1-22; sequence MEYLKRLALLISVIILTIFIMG. Cys23 carries the N-palmitoyl cysteine lipid modification. A lipid anchor (S-diacylglycerol cysteine) is attached at Cys23.

This sequence belongs to the staphylococcal tandem lipoprotein family.

It is found in the cell membrane. This is an uncharacterized protein from Staphylococcus aureus (strain USA300).